Consider the following 238-residue polypeptide: Ethylene-responsive transcription factor ERN3 (238 aa).

Residues 24 to 81 (KFVGVRQRASGKWAAEIKDTSKNIRMWLGTYKTAEEAARAYDEAAFLLRGTNTRTNFS) constitute a DNA-binding region (AP2/ERF).

The protein belongs to the AP2/ERF transcription factor family. ERF subfamily. In terms of tissue distribution, expressed in roots, root hairs and leaves.

It is found in the nucleus. In terms of biological role, transcription factor involved in symbiotic nodule signaling in response to rhizobial Nod factors (NFs). Binds to the GCC box (NF-responsive box) of ENOD11 promoter. May act as transcriptional repressor of NF-responsive box-containing target gene promoters in root hairs. The sequence is that of Ethylene-responsive transcription factor ERN3 from Medicago truncatula (Barrel medic).